The chain runs to 146 residues: Putative ankyrin repeat protein FPV224 (146 aa).

4 ANK repeats span residues serine 9 to isoleucine 38, lysine 42 to isoleucine 79, tyrosine 94 to glutamate 126, and tyrosine 127 to asparagine 145.

The sequence is that of Putative ankyrin repeat protein FPV224 from Fowlpox virus (strain NVSL) (FPV).